The sequence spans 441 residues: MEASFVQTTMALGLSSKKASSRNVAVERRNLITVCRFSVKTLLEKYTTEPIDDSSEEFVNFAAILEQILSHRFKGPVSWFSSDGQRGFWDYIRLACSKVPNNCVSSIENMENISTARAKGRAWIRVALMEKRMSEYITTALRDTRTTRRFYDSGAIMMREEATVLTGMLIGLSAIDFSFCLKGEVLDGKTPVVIDYTPYLKFTQSYDYLTDEEERHSAESSTSEDNSPEHPYLPLVTDEDSWYSKWHKMEQKFRIVYAQKGYLEELVRLRESQLKDLEAENRRLQLQLEEAAAQNQREKRELEGVILELQEQLTGLIPGDHAPLAQGSKDLTTRLVNQWPSLGTLSGAEGANNPKLYRRHSFMSTEPLSAEASLSSDSQRLGEGKRDEEPWGPIGKDPTPSMLGLCGSLASIPSCKSLASFKSNECLVSDSPEGSPALSPS.

An interaction with RAP2A region spans residues 1 to 293 (MEASFVQTTM…LQLQLEEAAA (293 aa)). Residues 52-184 (DDSSEEFVNF…IDFSFCLKGE (133 aa)) enclose the RUN domain. Thr-210 carries the phosphothreonine modification. Residues 211–234 (DEEERHSAESSTSEDNSPEHPYLP) form a disordered region. The residue at position 227 (Ser-227) is a Phosphoserine. The stretch at 262–317 (YLEELVRLRESQLKDLEAENRRLQLQLEEAAAQNQREKRELEGVILELQEQLTGLI) forms a coiled coil. The span at 367 to 379 (PLSAEASLSSDSQ) shows a compositional bias: polar residues. The tract at residues 367-399 (PLSAEASLSSDSQRLGEGKRDEEPWGPIGKDPT) is disordered. Residues 380–389 (RLGEGKRDEE) show a composition bias toward basic and acidic residues. 2 positions are modified to phosphoserine: Ser-411 and Ser-414.

Belongs to the RUNDC3 family. In terms of assembly, interacts with the GTP-bound form of RAP2A.

Its function is as follows. May act as an effector of RAP2A in neuronal cells. This chain is RUN domain-containing protein 3A (RUNDC3A), found in Bos taurus (Bovine).